A 138-amino-acid chain; its full sequence is Large ribosomal subunit protein uL16 (138 aa).

Residues 1-22 form a disordered region; that stretch reads MQQPARTKYRKQQKGRNKGIAT. Over residues 7–17 the composition is skewed to basic residues; it reads TKYRKQQKGRN.

This sequence belongs to the universal ribosomal protein uL16 family. As to quaternary structure, part of the 50S ribosomal subunit.

Binds 23S rRNA and is also seen to make contacts with the A and possibly P site tRNAs. This is Large ribosomal subunit protein uL16 from Nitrosospira multiformis (strain ATCC 25196 / NCIMB 11849 / C 71).